The sequence spans 258 residues: Undecaprenyl-diphosphatase (258 aa).

Transmembrane regions (helical) follow at residues 14-34, 39-59, 79-99, 106-126, 136-156, 176-196, 209-229, and 237-257; these read AAGE…PWLL, QGLT…LIYF, GKIL…GVLF, VFRS…ILHL, VALN…ALMP, AESA…AAVL, AFIA…KFLM, and FNIF…TALM.

Belongs to the UppP family.

The protein resides in the cell membrane. It carries out the reaction di-trans,octa-cis-undecaprenyl diphosphate + H2O = di-trans,octa-cis-undecaprenyl phosphate + phosphate + H(+). In terms of biological role, catalyzes the dephosphorylation of undecaprenyl diphosphate (UPP). Confers resistance to bacitracin. The protein is Undecaprenyl-diphosphatase of Elusimicrobium minutum (strain Pei191).